Reading from the N-terminus, the 358-residue chain is MATH domain and coiled-coil domain-containing protein At3g58440 (358 aa).

In terms of domain architecture, MATH spans 8–131; it reads QDKFTWVLEK…NDRLTIVAEV (124 aa). A coiled-coil region spans residues 250 to 309; that stretch reads LRDAGFKVDWLEKKLDQLKEKKEEEMSGLARLHEIEERLQKLKLLFVDLESQLQKEKVEA.

The chain is MATH domain and coiled-coil domain-containing protein At3g58440 from Arabidopsis thaliana (Mouse-ear cress).